The primary structure comprises 103 residues: Large ribosomal subunit protein bL21 (103 aa).

Belongs to the bacterial ribosomal protein bL21 family. As to quaternary structure, part of the 50S ribosomal subunit. Contacts protein L20.

This protein binds to 23S rRNA in the presence of protein L20. The chain is Large ribosomal subunit protein bL21 from Psychrobacter sp. (strain PRwf-1).